The chain runs to 442 residues: Decapping and exoribonuclease protein 1 (442 aa).

The span at 31–40 (QSKLCKEKTT) shows a compositional bias: basic and acidic residues. The tract at residues 31–56 (QSKLCKEKTTSDSSSSRKPSQQRDNY) is disordered. Low complexity predominate over residues 41–53 (SDSSSSRKPSQQR). R101 lines the substrate pocket. Residue E255 participates in a divalent metal cation binding. E293 serves as a coordination point for substrate. A divalent metal cation-binding residues include D295, E306, and L307. 2 residues coordinate substrate: K308 and Q330.

The protein belongs to the DXO/Dom3Z family. It depends on a divalent metal cation as a cofactor.

Its subcellular location is the cytoplasm. It carries out the reaction a 5'-end NAD(+)-phospho-ribonucleoside in mRNA + H2O = a 5'-end phospho-ribonucleoside in mRNA + NAD(+) + H(+). The catalysed reaction is a 5'-end (N(7)-methyl 5'-triphosphoguanosine)-ribonucleoside-ribonucleotide in mRNA + H2O = a (N(7)-methyl 5'-triphosphoguanosine)-nucleoside + a 5'-end phospho-ribonucleoside in mRNA + H(+). Decapping enzyme for NAD-capped RNAs: specifically hydrolyzes the nicotinamide adenine dinucleotide (NAD) cap from a subset of RNAs by removing the entire NAD moiety from the 5'-end of an NAD-capped RNA. The NAD-cap is present at the 5'-end of some RNAs and snoRNAs. In contrast to the canonical 5'-end N7 methylguanosine (m7G) cap, the NAD cap promotes mRNA decay. Also acts as a non-canonical decapping enzyme that removes the entire cap structure of m7G capped or incompletely capped RNAs. Has decapping activity toward incomplete 5'-end m7G cap mRNAs such as unmethylated 5'-end-capped RNA (cap0), while it has no activity toward 2'-O-ribose methylated m7G cap (cap1). Also has 5'-3' exonuclease activity. This is Decapping and exoribonuclease protein 1 (DXO1) from Saccharomyces cerevisiae (strain ATCC 204508 / S288c) (Baker's yeast).